A 1573-amino-acid chain; its full sequence is Pentafunctional AROM polypeptide 1 (1573 aa).

The tract at residues 1-380 (MAEPTKISIL…YEPKASVVSN (380 aa)) is 3-dehydroquinate synthase. NAD(+) contacts are provided by residues 44 to 46 (DTN), 81 to 84 (ENSK), 112 to 114 (GGV), and aspartate 117. Arginine 128 provides a ligand contact to 7-phospho-2-dehydro-3-deoxy-D-arabino-heptonate. 137 to 138 (TT) is a binding site for NAD(+). 2 residues coordinate 7-phospho-2-dehydro-3-deoxy-D-arabino-heptonate: aspartate 144 and lysine 150. Residue lysine 159 coordinates NAD(+). Asparagine 160 is a 7-phospho-2-dehydro-3-deoxy-D-arabino-heptonate binding site. NAD(+) is bound by residues 177 to 180 (FIDT) and asparagine 188. Glutamate 192 is a binding site for Zn(2+). 7-phospho-2-dehydro-3-deoxy-D-arabino-heptonate contacts are provided by residues 192-195 (EVIK) and lysine 246. Residue glutamate 256 is the Proton acceptor; for 3-dehydroquinate synthase activity of the active site. Residues 260–264 (RNLLN) and histidine 267 contribute to the 7-phospho-2-dehydro-3-deoxy-D-arabino-heptonate site. Histidine 267 contributes to the Zn(2+) binding site. The Proton acceptor; for 3-dehydroquinate synthase activity role is filled by histidine 271. Residues histidine 283 and lysine 352 each contribute to the 7-phospho-2-dehydro-3-deoxy-D-arabino-heptonate site. Histidine 283 provides a ligand contact to Zn(2+). Residues 393–838 (VIPGVPKDLN…WDALKQKFGV (446 aa)) are EPSP synthase. Cysteine 820 serves as the catalytic For EPSP synthase activity. The tract at residues 859-1051 (DASIVIIGMR…RRKRLSFFMS (193 aa)) is shikimate kinase. 866–873 (GMRGAGKT) is a binding site for ATP. The tract at residues 1052 to 1273 (LTLTDLRDSG…AAPGQLSAAE (222 aa)) is 3-dehydroquinase. The active-site Proton acceptor; for 3-dehydroquinate dehydratase activity is the histidine 1175. The active-site Schiff-base intermediate with substrate; for 3-dehydroquinate dehydratase activity is lysine 1203. Residues 1286–1573 (AKKFAIFGKP…NAVLGTDETK (288 aa)) are shikimate dehydrogenase.

The protein in the N-terminal section; belongs to the sugar phosphate cyclases superfamily. Dehydroquinate synthase family. In the 2nd section; belongs to the EPSP synthase family. This sequence in the 3rd section; belongs to the shikimate kinase family. It in the 4th section; belongs to the type-I 3-dehydroquinase family. The protein in the C-terminal section; belongs to the shikimate dehydrogenase family. As to quaternary structure, homodimer. Requires Zn(2+) as cofactor.

Its subcellular location is the cytoplasm. The catalysed reaction is 7-phospho-2-dehydro-3-deoxy-D-arabino-heptonate = 3-dehydroquinate + phosphate. It carries out the reaction 3-dehydroquinate = 3-dehydroshikimate + H2O. It catalyses the reaction shikimate + NADP(+) = 3-dehydroshikimate + NADPH + H(+). The enzyme catalyses shikimate + ATP = 3-phosphoshikimate + ADP + H(+). The catalysed reaction is 3-phosphoshikimate + phosphoenolpyruvate = 5-O-(1-carboxyvinyl)-3-phosphoshikimate + phosphate. It participates in metabolic intermediate biosynthesis; chorismate biosynthesis; chorismate from D-erythrose 4-phosphate and phosphoenolpyruvate: step 2/7. It functions in the pathway metabolic intermediate biosynthesis; chorismate biosynthesis; chorismate from D-erythrose 4-phosphate and phosphoenolpyruvate: step 3/7. Its pathway is metabolic intermediate biosynthesis; chorismate biosynthesis; chorismate from D-erythrose 4-phosphate and phosphoenolpyruvate: step 4/7. The protein operates within metabolic intermediate biosynthesis; chorismate biosynthesis; chorismate from D-erythrose 4-phosphate and phosphoenolpyruvate: step 5/7. It participates in metabolic intermediate biosynthesis; chorismate biosynthesis; chorismate from D-erythrose 4-phosphate and phosphoenolpyruvate: step 6/7. Its function is as follows. The AROM polypeptide catalyzes 5 consecutive enzymatic reactions in prechorismate polyaromatic amino acid biosynthesis. The protein is Pentafunctional AROM polypeptide 1 of Talaromyces marneffei (strain ATCC 18224 / CBS 334.59 / QM 7333) (Penicillium marneffei).